The primary structure comprises 279 residues: Lacto-N-neotetraose biosynthesis glycosyltransferase LgtB (279 aa).

The protein belongs to the glycosyltransferase 25 family.

It functions in the pathway glycan metabolism; lacto-N-neotetraose biosynthesis. The protein operates within bacterial outer membrane biogenesis; lipooligosaccharide biosynthesis. Adds the second galactose to the lacto-N-tetraose chain in lipooligosaccharide (LOS). This Neisseria gonorrhoeae protein is Lacto-N-neotetraose biosynthesis glycosyltransferase LgtB (lgtB).